The primary structure comprises 545 residues: Chaperonin GroEL (545 aa).

Residues 30-33, K51, 87-91, G415, and D495 each bind ATP; these read TLGP and DGTTT.

Belongs to the chaperonin (HSP60) family. Forms a cylinder of 14 subunits composed of two heptameric rings stacked back-to-back. Interacts with the co-chaperonin GroES.

Its subcellular location is the cytoplasm. It catalyses the reaction ATP + H2O + a folded polypeptide = ADP + phosphate + an unfolded polypeptide.. Together with its co-chaperonin GroES, plays an essential role in assisting protein folding. The GroEL-GroES system forms a nano-cage that allows encapsulation of the non-native substrate proteins and provides a physical environment optimized to promote and accelerate protein folding. This is Chaperonin GroEL from Shewanella oneidensis (strain ATCC 700550 / JCM 31522 / CIP 106686 / LMG 19005 / NCIMB 14063 / MR-1).